The primary structure comprises 72 residues: UPF0154 protein BLi02038/BL02936 (72 aa).

The chain crosses the membrane as a helical span at residues 4–24 (WVVILVGVLALLAGVALGFFI).

The protein belongs to the UPF0154 family.

Its subcellular location is the cell membrane. This chain is UPF0154 protein BLi02038/BL02936, found in Bacillus licheniformis (strain ATCC 14580 / DSM 13 / JCM 2505 / CCUG 7422 / NBRC 12200 / NCIMB 9375 / NCTC 10341 / NRRL NRS-1264 / Gibson 46).